Consider the following 1276-residue polypeptide: Sterol regulatory element-binding protein cleavage-activating protein (1276 aa).

Topologically, residues 1–18 are cytoplasmic; the sequence is MTLTERLREKISQAFYNH. A helical transmembrane segment spans residues 19–39; that stretch reads GLLCASYPIPIILFTGLCILA. Residues 40-279 lie on the Lumenal side of the membrane; sequence CCYPLLKLPL…NLVHVHFKEE (240 aa). A loop-1 region spans residues 46-284; that stretch reads KLPLPGTGPV…HFKEEIGIAE (239 aa). Residues 60-81 form a disordered region; the sequence is PVKGYSPPPADSDHKQGEPSEQ. The N-linked (GlcNAc...) asparagine glycan is linked to Asn263. Residues 280–300 traverse the membrane as a helical segment; it reads IGIAELIPLVTTYIILFAYIY. Residues 284–442 form the SSD domain; the sequence is ELIPLVTTYI…MLFFTTVLSI (159 aa). The Cytoplasmic segment spans residues 301–312; that stretch reads FSTRKIDMVKSK. A helical membrane pass occupies residues 313–333; that stretch reads WGLALAAVVTVLSSLLMSVGL. The Lumenal portion of the chain corresponds to 334–344; sequence CTLFGLTPTLN. The helical transmembrane segment at 345–365 threads the bilayer; the sequence is GGEIFPYLVVVIGLENVLVLT. At 366–401 the chain is on the cytoplasmic side; the sequence is KSVVSTPVDLEVKLRIAQGLSSESWSIMKNVATELG. A helical transmembrane segment spans residues 402–422; the sequence is IILIGYFTLVPAIQEFCLFAV. Position 423 (Val423) is a topological domain, lumenal. A helical membrane pass occupies residues 424 to 444; it reads GLVSDFFLQMLFFTTVLSIDI. The Cytoplasmic segment spans residues 445–518; sequence RRMELADLNK…FLARTRLAQR (74 aa). Positions 447–452 match the ER export signal motif; it reads MELADL. Residues Lys454 and Lys466 each participate in a glycyl lysine isopeptide (Lys-Gly) (interchain with G-Cter in ubiquitin) cross-link. The helical transmembrane segment at 519–539 threads the bilayer; the sequence is LIMAGTVVWIGILVYTDPAGL. The tract at residues 535–710 is loop-7; sequence DPAGLRTYLA…QTHGDITLYK (176 aa). Residues 540–707 lie on the Lumenal side of the membrane; sequence RTYLAAQVTE…GGTQTHGDIT (168 aa). N-linked (GlcNAc...) asparagine glycans are attached at residues Asn590 and Asn641. The helical transmembrane segment at 708-728 threads the bilayer; it reads LYKVAALGLAAGIVLVLLLLC. Residues 729-1276 are Cytoplasmic-facing; that stretch reads LYRVLCPRNY…YVPSVLEKLD (548 aa). An interaction with SREBF2 region spans residues 731-1276; that stretch reads RVLCPRNYGQ…YVPSVLEKLD (546 aa). The WD 1 repeat unit spans residues 771–811; that stretch reads VLRGHLMDIECLASDGMLLVSCCLAGQVCVWDAQTGDCLTR. 6 positions are modified to phosphoserine: Ser821, Ser837, Ser843, Ser850, Ser905, and Ser934. Positions 834 to 903 are disordered; sequence ERLSDGGKAS…RHRAGCGRSR (70 aa). The disordered stretch occupies residues 928 to 958; that stretch reads SALRPPSPGPPLPQASQEEGTAPEKGSPPLA. WD repeat units follow at residues 949-999 and 1002-1039; these read APEK…LCCS and EISS…SLSP. Arg1048 is subject to Omega-N-methylarginine. WD repeat units follow at residues 1074-1111, 1114-1152, 1155-1192, and 1194-1232; these read AHQK…CLFT, GHSG…RVSH, AHRG…KLYS, and QQDL…LLQT.

The protein belongs to the WD repeat SCAP family. In terms of assembly, membrane region forms a homotetramer. Component of the SCAP-SREBP complex (composed of SCAP and SREBF1/SREBP1 or SREBF2/SREBP2); interacts with SREBF1/SREBP1 or SREBF2/SREBP2 through its C-terminal cytoplasmic domain. Forms a ternary complex with INSIG1 or INSIG2 through its transmembrane domains at high sterol concentrations. Interacts with PAQR3; the interaction anchors the SCAP-SREBP complex to the Golgi apparatus in low cholesterol conditions. Interacts with the SEC23-SEC24 complex in a SAR1-GTP-dependent manner through an ER export signal in its third cytoplasmic loop. Interacts with RNF139; the interaction inhibits the interaction of SCAP with SEC24B and hampering the ER to Golgi transport of the SCAP-SREBP complex. Interacts with SPRING1. Post-translationally, ubiquitinated at Lys-454 and Lys-466. RNF145 triggers ubiquitination of SCAP, likely inhibiting SCAP-SREBP complex transport to the Golgi apparatus and the subsequent processing/maturation of SREBF2/SREBP2.

It localises to the endoplasmic reticulum membrane. Its subcellular location is the golgi apparatus membrane. The protein localises to the cytoplasmic vesicle. The protein resides in the COPII-coated vesicle membrane. In terms of biological role, escort protein required for cholesterol as well as lipid homeostasis. Regulates export of the SCAP-SREBP complex from the endoplasmic reticulum to the Golgi upon low cholesterol, thereby regulating the processing of sterol regulatory element-binding proteins (SREBPs) SREBF1/SREBP1 and SREBF2/SREBP2. At high sterol concentrations, formation of a ternary complex with INSIG (INSIG1 or INSIG2) leads to mask the ER export signal in SCAP, promoting retention of the complex in the endoplasmic reticulum. Low sterol concentrations trigger release of INSIG, a conformational change in the SSD domain of SCAP, unmasking of the ER export signal, promoting recruitment into COPII-coated vesicles and transport of the SCAP-SREBP to the Golgi: in the Golgi, SREBPs are then processed, releasing the transcription factor fragment of SREBPs from the membrane, its import into the nucleus and up-regulation of LDLR, INSIG1 and the mevalonate pathway. Binds cholesterol via its SSD domain. The protein is Sterol regulatory element-binding protein cleavage-activating protein of Rattus norvegicus (Rat).